The following is a 565-amino-acid chain: Atlastin-2 (565 aa).

The Cytoplasmic portion of the chain corresponds to 1–458 (MVLKKGVKFF…NIFYAARTPA (458 aa)). A GB1/RHD3-type G domain is found at 73 to 318 (DLNIVVVSVA…LVPLLLAPEN (246 aa)). The GDP site is built by R86, K87, G88, K89, S90, F91, Q157, R226, and D227. Positions 86, 87, 88, 89, 90, and 91 each coordinate GTP. S90 contributes to the Mg(2+) binding site. 2 residues coordinate GTP: R226 and D227. Positions 238 to 266 (LEGGKQFLEKRLQVKKNQHEELQNVRKHI) form a coiled coil. The residue at position 252 (K252) is an N6-methyllysine. Residues V285 and N288 each coordinate GDP. V285 lines the GTP pocket. The interval 356–447 (MLQATAEANN…YANFIKHNDG (92 aa)) is 3HB (three-helix bundle) domain. The segment at 448–456 (KNIFYAART) is linker. A helical membrane pass occupies residues 459–479 (TLFAVMFAMYIISGLTGFIGL). At 480-481 (NS) the chain is on the lumenal side. Residues 482–502 (IAVLCNLVMGLALTFLCTWAY) form a helical membrane-spanning segment. At 503-565 (VKYSGEFREI…VSHHARLKTD (63 aa)) the chain is on the cytoplasmic side. The interval 529–565 (KPLGDNLMEENIRQSVTNSIKAGLTDQVSHHARLKTD) is autoinhibitory domain.

Belongs to the TRAFAC class dynamin-like GTPase superfamily. GB1/RHD3 GTPase family. GB1 subfamily. In terms of assembly, monomeric and homodimeric. The homodimer, transiently formed by two molecules on opposing membranes, is the active form mediating ER membrane fusion. Interacts with REEP5 and RTN3; these proteins are involved in endoplasmic reticulum tubular network organization. Interacts with ZFYVE27; both proteins are involved in endoplasmic reticulum tubular network organization.

The protein localises to the endoplasmic reticulum membrane. The enzyme catalyses GTP + H2O = GDP + phosphate + H(+). Functionally, atlastin-2 (ATL2) is a membrane-anchored GTPase that mediates the GTP-dependent fusion of endoplasmic reticulum (ER) membranes, maintaining the continuous ER network. It facilitates the formation of three-way junctions where ER tubules intersect. Two atlastin-2 on neighboring ER tubules bind GTP and form loose homodimers through the GB1/RHD3-type G domains and 3HB regions. Upon GTP hydrolysis, the 3HB regions tighten, pulling the membranes together to drive their fusion. After fusion, the homodimer disassembles upon release of inorganic phosphate (Pi). Subsequently, GDP dissociates, resetting the monomers to a conformation ready for a new fusion cycle. The polypeptide is Atlastin-2 (Macaca fascicularis (Crab-eating macaque)).